The following is a 262-amino-acid chain: 1-(5-phosphoribosyl)-5-[(5-phosphoribosylamino)methylideneamino] imidazole-4-carboxamide isomerase (262 aa).

D8 serves as the catalytic Proton acceptor. D130 acts as the Proton donor in catalysis.

Belongs to the HisA/HisF family.

The protein resides in the cytoplasm. It catalyses the reaction 1-(5-phospho-beta-D-ribosyl)-5-[(5-phospho-beta-D-ribosylamino)methylideneamino]imidazole-4-carboxamide = 5-[(5-phospho-1-deoxy-D-ribulos-1-ylimino)methylamino]-1-(5-phospho-beta-D-ribosyl)imidazole-4-carboxamide. It functions in the pathway amino-acid biosynthesis; L-histidine biosynthesis; L-histidine from 5-phospho-alpha-D-ribose 1-diphosphate: step 4/9. The chain is 1-(5-phosphoribosyl)-5-[(5-phosphoribosylamino)methylideneamino] imidazole-4-carboxamide isomerase from Chloroherpeton thalassium (strain ATCC 35110 / GB-78).